We begin with the raw amino-acid sequence, 122 residues long: Biogenesis of lysosome-related organelles complex 1 subunit CNL1 (122 aa).

Positions 1–10 are enriched in basic and acidic residues; the sequence is MQDNSSHSRE. The tract at residues 1-21 is disordered; sequence MQDNSSHSRESASAGDDPLGI. Positions 63-95 form a coiled coil; it reads ENTIDKNIAKFKELLEKCDTLENHYEMLNQLAI.

It belongs to the BLOC1S4 family. Component of the biogenesis of lysosome-related organelles complex-1 (BLOC-1) composed of at least BLI1, BLS1, CNL1, KXD1, SNN1 and VAB2.

Its subcellular location is the cytoplasm. Component of the biogenesis of lysosome-related organelles complex-1 (BLOC-1), a complex that is involved in endosomal cargo sorting. In Saccharomyces cerevisiae (strain Lalvin QA23) (Baker's yeast), this protein is Biogenesis of lysosome-related organelles complex 1 subunit CNL1 (CLN1).